Reading from the N-terminus, the 377-residue chain is RIB43A-like with coiled-coils protein 2 (377 aa).

2 coiled-coil regions span residues 217–250 (NKNQ…LRGD) and 282–308 (EEIR…RDMD).

It belongs to the RIB43A family. Microtubule inner protein component of sperm flagellar doublet microtubules. As to expression, expressed in trachea multiciliated cells.

The protein resides in the cytoplasm. It localises to the cytoskeleton. The protein localises to the cilium axoneme. Its subcellular location is the flagellum axoneme. In terms of biological role, microtubule inner protein (MIP) part of the dynein-decorated doublet microtubules (DMTs) in cilia axoneme, which is required for motile cilia beating. In Bos taurus (Bovine), this protein is RIB43A-like with coiled-coils protein 2.